The primary structure comprises 357 residues: Putative F-box/kelch-repeat protein At5g38680 (357 aa).

In terms of domain architecture, F-box spans 14-61 (NSNPSLPDALIISCIARVSRLYYPILSFVSKSFRSLLASPELYKERSL). Kelch repeat units lie at residues 131 to 175 (NIYN…VLDG), 177 to 224 (IYVA…SKSL), 226 to 267 (IDEK…YCEI), and 268 to 313 (ENVL…GGKK).

The sequence is that of Putative F-box/kelch-repeat protein At5g38680 from Arabidopsis thaliana (Mouse-ear cress).